A 543-amino-acid chain; its full sequence is 2,3-bisphosphoglycerate-independent phosphoglycerate mutase (543 aa).

2 residues coordinate Mn(2+): Asp-20 and Ser-73. Ser-73 acts as the Phosphoserine intermediate in catalysis. Substrate contacts are provided by residues His-134, 166–167 (RD), Arg-198, Arg-204, 278–281 (RGDR), and Lys-360. Mn(2+)-binding residues include Asp-428, His-432, Asp-469, His-470, and His-488.

It belongs to the BPG-independent phosphoglycerate mutase family. In terms of assembly, monomer. Mn(2+) serves as cofactor.

The catalysed reaction is (2R)-2-phosphoglycerate = (2R)-3-phosphoglycerate. It participates in carbohydrate degradation; glycolysis; pyruvate from D-glyceraldehyde 3-phosphate: step 3/5. Its function is as follows. Catalyzes the interconversion of 2-phosphoglycerate and 3-phosphoglycerate. This Rhodopirellula baltica (strain DSM 10527 / NCIMB 13988 / SH1) protein is 2,3-bisphosphoglycerate-independent phosphoglycerate mutase.